The sequence spans 344 residues: Leucine-rich repeat-containing protein 75A (344 aa).

The disordered stretch occupies residues 1 to 25 (MGTRQTKGSLAERASPGAAPGPRRE). Residues 11 to 21 (AERASPGAAPG) are compositionally biased toward low complexity. LRR repeat units lie at residues 204 to 217 (VDSV…LTDD) and 229 to 242 (LPRL…GNRL). Residues 295–344 (LPTILELGEGPGSGEEVREGTVGQEDPGGGPVAPAEDHHEGKETVAAAQT) are disordered.

The protein belongs to the LRRC75 family.

This Homo sapiens (Human) protein is Leucine-rich repeat-containing protein 75A (LRRC75A).